Here is a 226-residue protein sequence, read N- to C-terminus: 7-cyano-7-deazaguanine synthase (226 aa).

10–20 contributes to the ATP binding site; sequence LSGGLDSATAA. Zn(2+)-binding residues include C191, C199, C202, and C205.

It belongs to the QueC family. Requires Zn(2+) as cofactor.

It catalyses the reaction 7-carboxy-7-deazaguanine + NH4(+) + ATP = 7-cyano-7-deazaguanine + ADP + phosphate + H2O + H(+). Its pathway is purine metabolism; 7-cyano-7-deazaguanine biosynthesis. Catalyzes the ATP-dependent conversion of 7-carboxy-7-deazaguanine (CDG) to 7-cyano-7-deazaguanine (preQ(0)). The protein is 7-cyano-7-deazaguanine synthase of Synechococcus sp. (strain CC9902).